The primary structure comprises 262 residues: Type III pantothenate kinase (262 aa).

9–16 is an ATP binding site; that stretch reads DAGNSRIK. Substrate contacts are provided by residues tyrosine 96 and 103–106; that span reads GSDR. Aspartate 105 functions as the Proton acceptor in the catalytic mechanism. An ATP-binding site is contributed by threonine 129. A substrate-binding site is contributed by threonine 189.

Belongs to the type III pantothenate kinase family. Homodimer. NH4(+) serves as cofactor. K(+) is required as a cofactor.

It is found in the cytoplasm. It catalyses the reaction (R)-pantothenate + ATP = (R)-4'-phosphopantothenate + ADP + H(+). It functions in the pathway cofactor biosynthesis; coenzyme A biosynthesis; CoA from (R)-pantothenate: step 1/5. Its function is as follows. Catalyzes the phosphorylation of pantothenate (Pan), the first step in CoA biosynthesis. This chain is Type III pantothenate kinase, found in Burkholderia vietnamiensis (strain G4 / LMG 22486) (Burkholderia cepacia (strain R1808)).